A 306-amino-acid chain; its full sequence is Agmatinase (306 aa).

Mn(2+) is bound by residues H126, D149, H151, D153, D230, and D232.

It belongs to the arginase family. Agmatinase subfamily. Requires Mn(2+) as cofactor.

It carries out the reaction agmatine + H2O = urea + putrescine. The protein operates within amine and polyamine biosynthesis; putrescine biosynthesis via agmatine pathway; putrescine from agmatine: step 1/1. Functionally, catalyzes the formation of putrescine from agmatine. The chain is Agmatinase from Salmonella dublin (strain CT_02021853).